The chain runs to 493 residues: Neuronal pentraxin receptor (493 aa).

Residues 1–2 (MK) lie on the Cytoplasmic side of the membrane. A helical; Signal-anchor for type II membrane protein transmembrane segment spans residues 3–23 (FLAVLLAAGMLAFLGAVICII). The Extracellular segment spans residues 24 to 493 (ASVPLAASPA…FDVCKGRAKA (470 aa)). The tract at residues 37–72 (PGGTDNASAASAAGGSGPQRSLSALHSAGGSAGPSV) is disordered. An N-linked (GlcNAc...) asparagine glycan is attached at Asn-42. Over residues 57-72 (SLSALHSAGGSAGPSV) the composition is skewed to low complexity. An N-linked (GlcNAc...) asparagine glycan is attached at Asn-211. One can recognise a Pentraxin (PTX) domain in the interval 285–487 (DAFKVSIPIR…GAKKAAFDVC (203 aa)). Cys-315 and Cys-376 are joined by a disulfide. Asn-340, Glu-418, Gln-419, Asp-420, and Gln-430 together coordinate Ca(2+). A glycan (N-linked (GlcNAc...) asparagine) is linked at Asn-456.

Heteropentamer with NPTX1 and/or NPTX2. Also binds taipoxin-associated calcium-binding protein 49 (TCBP49/RCN2). Interacts with KLHL2. Ca(2+) serves as cofactor. In terms of processing, ubiquitinated by a cullin-RING-based BCR (BTB-CUL3-RBX1) E3 ubiquitin-protein ligase complex containing KLHL2.

The protein resides in the membrane. Its function is as follows. May be involved in mediating uptake of synaptic material during synapse remodeling or in mediating the synaptic clustering of AMPA glutamate receptors at a subset of excitatory synapses. This Mus musculus (Mouse) protein is Neuronal pentraxin receptor (Nptxr).